Here is a 493-residue protein sequence, read N- to C-terminus: Cobyric acid synthase (493 aa).

In terms of domain architecture, GATase cobBQ-type spans 246-440 (PIDIAVIKMP…IHGVFDGVSF (195 aa)). Catalysis depends on Cys-326, which acts as the Nucleophile. His-432 is a catalytic residue.

The protein belongs to the CobB/CobQ family. CobQ subfamily.

It participates in cofactor biosynthesis; adenosylcobalamin biosynthesis. In terms of biological role, catalyzes amidations at positions B, D, E, and G on adenosylcobyrinic A,C-diamide. NH(2) groups are provided by glutamine, and one molecule of ATP is hydrogenolyzed for each amidation. This Clostridium botulinum (strain Langeland / NCTC 10281 / Type F) protein is Cobyric acid synthase.